The chain runs to 249 residues: Small ribosomal subunit protein uS2 (249 aa).

This sequence belongs to the universal ribosomal protein uS2 family.

This chain is Small ribosomal subunit protein uS2, found in Bordetella parapertussis (strain 12822 / ATCC BAA-587 / NCTC 13253).